Here is a 101-residue protein sequence, read N- to C-terminus: NADH-quinone oxidoreductase subunit K (101 aa).

Helical transmembrane passes span Leu-4 to Leu-24, Ile-30 to Phe-50, and Val-61 to Leu-81.

It belongs to the complex I subunit 4L family. As to quaternary structure, NDH-1 is composed of 14 different subunits. Subunits NuoA, H, J, K, L, M, N constitute the membrane sector of the complex.

The protein localises to the cell inner membrane. It catalyses the reaction a quinone + NADH + 5 H(+)(in) = a quinol + NAD(+) + 4 H(+)(out). In terms of biological role, NDH-1 shuttles electrons from NADH, via FMN and iron-sulfur (Fe-S) centers, to quinones in the respiratory chain. The immediate electron acceptor for the enzyme in this species is believed to be ubiquinone. Couples the redox reaction to proton translocation (for every two electrons transferred, four hydrogen ions are translocated across the cytoplasmic membrane), and thus conserves the redox energy in a proton gradient. This Methylovorus glucosotrophus (strain SIP3-4) protein is NADH-quinone oxidoreductase subunit K.